A 159-amino-acid chain; its full sequence is Transcription elongation factor GreA (159 aa).

The stretch at 3-37 forms a coiled coil; it reads TNKEVVLTYEGLQKLEQELENLKTVKRREVAERIK.

This sequence belongs to the GreA/GreB family.

Functionally, necessary for efficient RNA polymerase transcription elongation past template-encoded arresting sites. The arresting sites in DNA have the property of trapping a certain fraction of elongating RNA polymerases that pass through, resulting in locked ternary complexes. Cleavage of the nascent transcript by cleavage factors such as GreA or GreB allows the resumption of elongation from the new 3'terminus. GreA releases sequences of 2 to 3 nucleotides. The protein is Transcription elongation factor GreA of Acetivibrio thermocellus (strain ATCC 27405 / DSM 1237 / JCM 9322 / NBRC 103400 / NCIMB 10682 / NRRL B-4536 / VPI 7372) (Clostridium thermocellum).